The chain runs to 236 residues: GCN5-related N-acetyltransferase 8 (236 aa).

The N-acetyltransferase domain occupies 96–235; it reads ATITSSPSPD…DALEAFDQVN (140 aa). Acetyl-CoA-binding positions include 161 to 163, 169 to 174, 200 to 202, and Tyr-207; these read IFV, RKGFGS, and NVN. Tyr-207 functions as the Proton donor in the catalytic mechanism.

This sequence belongs to the acetyltransferase family. GNAT subfamily. Oligomer. As to expression, expressed throughout the plant.

Its subcellular location is the cytoplasm. It is found in the nucleus. The catalysed reaction is an N-terminal L-alpha-aminoacyl-[protein] + acetyl-CoA = N-terminal N(alpha)-acetyl-L-alpha-aminoacyl-[protein] + CoA + H(+). It carries out the reaction L-lysyl-[protein] + acetyl-CoA = N(6)-acetyl-L-lysyl-[protein] + CoA + H(+). In terms of biological role, probable protein acetyltransferase with dual specificity triggering both N-alpha-acetylation (NTA) and epsilon-lysine acetylation (KA). The polypeptide is GCN5-related N-acetyltransferase 8 (Arabidopsis thaliana (Mouse-ear cress)).